The chain runs to 525 residues: GMP synthase [glutamine-hydrolyzing] (525 aa).

Residues 8–207 (KILILDFGSQ…ALDICGCKAN (200 aa)) enclose the Glutamine amidotransferase type-1 domain. C85 functions as the Nucleophile in the catalytic mechanism. Catalysis depends on residues H181 and E183. One can recognise a GMPS ATP-PPase domain in the interval 208–400 (WKPSSIIEDA…LGLPYNMLYR (193 aa)). 235–241 (SGGVDSS) contributes to the ATP binding site.

As to quaternary structure, homodimer.

The catalysed reaction is XMP + L-glutamine + ATP + H2O = GMP + L-glutamate + AMP + diphosphate + 2 H(+). It functions in the pathway purine metabolism; GMP biosynthesis; GMP from XMP (L-Gln route): step 1/1. In terms of biological role, catalyzes the synthesis of GMP from XMP. The protein is GMP synthase [glutamine-hydrolyzing] of Shewanella frigidimarina (strain NCIMB 400).